Reading from the N-terminus, the 322-residue chain is Tetraacyldisaccharide 4'-kinase (322 aa).

54–61 (SVGGTGKT) lines the ATP pocket.

This sequence belongs to the LpxK family.

The enzyme catalyses a lipid A disaccharide + ATP = a lipid IVA + ADP + H(+). It participates in glycolipid biosynthesis; lipid IV(A) biosynthesis; lipid IV(A) from (3R)-3-hydroxytetradecanoyl-[acyl-carrier-protein] and UDP-N-acetyl-alpha-D-glucosamine: step 6/6. In terms of biological role, transfers the gamma-phosphate of ATP to the 4'-position of a tetraacyldisaccharide 1-phosphate intermediate (termed DS-1-P) to form tetraacyldisaccharide 1,4'-bis-phosphate (lipid IVA). This chain is Tetraacyldisaccharide 4'-kinase, found in Francisella tularensis subsp. tularensis (strain FSC 198).